The primary structure comprises 288 residues: Lipoyl synthase (288 aa).

[4Fe-4S] cluster is bound by residues Cys39, Cys44, Cys50, Cys65, Cys69, Cys72, and Ser276. Positions 51–265 (WGKGTATFMI…KETGLKKGFE (215 aa)) constitute a Radical SAM core domain.

This sequence belongs to the radical SAM superfamily. Lipoyl synthase family. [4Fe-4S] cluster serves as cofactor.

The protein resides in the cytoplasm. The enzyme catalyses [[Fe-S] cluster scaffold protein carrying a second [4Fe-4S](2+) cluster] + N(6)-octanoyl-L-lysyl-[protein] + 2 oxidized [2Fe-2S]-[ferredoxin] + 2 S-adenosyl-L-methionine + 4 H(+) = [[Fe-S] cluster scaffold protein] + N(6)-[(R)-dihydrolipoyl]-L-lysyl-[protein] + 4 Fe(3+) + 2 hydrogen sulfide + 2 5'-deoxyadenosine + 2 L-methionine + 2 reduced [2Fe-2S]-[ferredoxin]. The protein operates within protein modification; protein lipoylation via endogenous pathway; protein N(6)-(lipoyl)lysine from octanoyl-[acyl-carrier-protein]: step 2/2. Its function is as follows. Catalyzes the radical-mediated insertion of two sulfur atoms into the C-6 and C-8 positions of the octanoyl moiety bound to the lipoyl domains of lipoate-dependent enzymes, thereby converting the octanoylated domains into lipoylated derivatives. The chain is Lipoyl synthase from Bacteroides fragilis (strain YCH46).